The sequence spans 186 residues: Elongation factor P (186 aa).

The protein belongs to the elongation factor P family.

The protein resides in the cytoplasm. The protein operates within protein biosynthesis; polypeptide chain elongation. Involved in peptide bond synthesis. Stimulates efficient translation and peptide-bond synthesis on native or reconstituted 70S ribosomes in vitro. Probably functions indirectly by altering the affinity of the ribosome for aminoacyl-tRNA, thus increasing their reactivity as acceptors for peptidyl transferase. This Clostridium acetobutylicum (strain ATCC 824 / DSM 792 / JCM 1419 / IAM 19013 / LMG 5710 / NBRC 13948 / NRRL B-527 / VKM B-1787 / 2291 / W) protein is Elongation factor P.